Consider the following 292-residue polypeptide: MNNLVCPAIAFPSFLDPVIIQLGPITLHWYGLGYVVGILFAWWYAQKLLKKPSLWHKNHPPMTKEKIGDFVVWSAISVVVGGRLGQVLVWDPLYYFSHPSSIIAVWDGGMSFHGGLIGIIIAMILFARKNNINIRSMFDIIAAGAPIGIGIVRICNFINQELWGNATTQPWAVCFPLDPYYLPRHPSQLYEAFMEGFILFMILFIVIFTFKAFKRRGTVSGIFIIGYAIARSISEVYRAPQEDPEWFSTLFHSTGFTYGMALSLPMLLLGFYLLLQAFKDKSTENDTPQRKN.

A run of 7 helical transmembrane segments spans residues 25–45, 70–90, 102–122, 138–158, 193–213, 217–237, and 255–275; these read ITLHWYGLGYVVGILFAWWYA, FVVWSAISVVVGGRLGQVLVW, IIAVWDGGMSFHGGLIGIIIA, FDIIAAGAPIGIGIVRICNFI, FMEGFILFMILFIVIFTFKAF, GTVSGIFIIGYAIARSISEVY, and GFTYGMALSLPMLLLGFYLLL. A 1,2-diacyl-sn-glycero-3-phospho-(1'-sn-glycerol) is bound at residue Arg-153.

It belongs to the Lgt family.

Its subcellular location is the cell inner membrane. The catalysed reaction is L-cysteinyl-[prolipoprotein] + a 1,2-diacyl-sn-glycero-3-phospho-(1'-sn-glycerol) = an S-1,2-diacyl-sn-glyceryl-L-cysteinyl-[prolipoprotein] + sn-glycerol 1-phosphate + H(+). Its pathway is protein modification; lipoprotein biosynthesis (diacylglyceryl transfer). In terms of biological role, catalyzes the transfer of the diacylglyceryl group from phosphatidylglycerol to the sulfhydryl group of the N-terminal cysteine of a prolipoprotein, the first step in the formation of mature lipoproteins. The polypeptide is Phosphatidylglycerol--prolipoprotein diacylglyceryl transferase (Bartonella tribocorum (strain CIP 105476 / IBS 506)).